Reading from the N-terminus, the 326-residue chain is F-box/LRR-repeat protein 12 (326 aa).

The F-box domain maps to 1 to 47 (MATLVELPDSVLLEIFSYLPVRDRIRISRVCHRWKRLVDDRWLWRHV). LRR repeat units follow at residues 51–78 (LYTM…RMGG), 86–111 (APQL…CLHV), 113–133 (DLSM…ELHS), 161–185 (VPAF…VLGG), 186–211 (TYRV…EVLG), 212–236 (CTLS…IRLT), 237–261 (VRGL…CLQG), and 266–291 (PEMP…ELQG).

Interacts with SKP1 and CUL1.

The protein operates within protein modification; protein ubiquitination. Its function is as follows. Substrate-recognition component of the SCF (SKP1-CUL1-F-box protein)-type E3 ubiquitin ligase complex. Mediates the polyubiquitination and proteasomal degradation of CAMK1 leading to disruption of cyclin D1/CDK4 complex assembly which results in G1 cell cycle arrest in lung epithelia. The sequence is that of F-box/LRR-repeat protein 12 (FBXL12) from Homo sapiens (Human).